Consider the following 426-residue polypeptide: Isocitrate dehydrogenase [NADP] (426 aa).

5 residues coordinate D-threo-isocitrate: S123, N125, R129, R139, and R162. D312 is a Mg(2+) binding site. NADP(+)-binding positions include 344 to 350 (HGTAWDI), N357, and K404.

Belongs to the isocitrate and isopropylmalate dehydrogenases family. As to quaternary structure, homodimer. Mg(2+) serves as cofactor. It depends on Mn(2+) as a cofactor.

The catalysed reaction is D-threo-isocitrate + NADP(+) = 2-oxoglutarate + CO2 + NADPH. Its function is as follows. Catalyzes the oxidative decarboxylation of isocitrate to 2-oxoglutarate and carbon dioxide with the concomitant reduction of NADP(+). This is Isocitrate dehydrogenase [NADP] (icd) from Aquifex aeolicus (strain VF5).